A 400-amino-acid polypeptide reads, in one-letter code: CinA-like protein (400 aa).

It belongs to the CinA family.

The chain is CinA-like protein from Sulfurihydrogenibium sp. (strain YO3AOP1).